Consider the following 30-residue polypeptide: Snaclec coagulation factor IX/factor X-binding protein subunit B (30 aa).

A disulfide bond links cysteine 2 and cysteine 13. Residues tyrosine 9 to cysteine 30 form the C-type lectin domain.

It belongs to the snaclec family. Heterodimer of subunits A and B; disulfide-linked. Post-translationally, glycosylated. In terms of tissue distribution, expressed by the venom gland.

Its subcellular location is the secreted. Anticoagulant protein which binds to the gamma-carboxyglutamic acid-domain regions of factors IX (F9) and factor X (F10) in the presence of calcium with a 1 to 1 stoichiometry. The polypeptide is Snaclec coagulation factor IX/factor X-binding protein subunit B (Bothrops jararaca (Jararaca)).